Reading from the N-terminus, the 381-residue chain is MERSHLPETPFDLAHSGPRFQAQSSGNGSVLDNVLPDMAHLVNPYWSRFAPMDPMMSKILGLFTLAIMIISCCGNGVVVYIFGGTKSLRTPANLLVLNLAFSDFCMMASQSPVMIINFYYETWVLGPLWCDIYAGCGSLFGCVSIWSMCMIAFDRYNVIVKGINGTPMTIKTSIMKILFIWMMAVFWTVMPLIGWSAYVPEGNLTACSIDYMTRMWNPRSYLITYSLFVYYTPLFLICYSYWFIIAAVAAHEKAMREQAKKMNVKSLRSSEDCDKSAEGKLAKVALTTISLWFMAWTPYLVICYFGLFKIDGLTPLTTIWGATFAKTSAVYNPIVYGISHPKYRIVLKEKCPMCVFGNTDEPKPDAPASDTETTSEADSKA.

Over Met1 to Met56 the chain is Extracellular. Asn27 is a glycosylation site (N-linked (GlcNAc...) asparagine). Residues Ser57 to Ile81 form a helical membrane-spanning segment. Topologically, residues Phe82–Asn93 are cytoplasmic. A helical membrane pass occupies residues Leu94–Tyr119. The Extracellular portion of the chain corresponds to Tyr120 to Tyr133. The cysteines at positions 130 and 207 are disulfide-linked. The helical transmembrane segment at Ala134–Phe153 threads the bilayer. The Cytoplasmic portion of the chain corresponds to Asp154 to Thr172. A helical membrane pass occupies residues Ser173–Ser196. The Extracellular portion of the chain corresponds to Ala197 to Ser220. Residues Tyr221 to Val248 traverse the membrane as a helical segment. Topologically, residues Ala249–Lys283 are cytoplasmic. A helical membrane pass occupies residues Val284–Leu307. The Extracellular segment spans residues Phe308 to Thr314. Residues Pro315–Ser339 form a helical membrane-spanning segment. Lys326 carries the N6-(retinylidene)lysine modification. At His340–Ala381 the chain is on the cytoplasmic side. Residues Thr359–Ala381 are disordered. Polar residues predominate over residues Asp370–Ala381.

This sequence belongs to the G-protein coupled receptor 1 family. Opsin subfamily. Phosphorylated on some or all of the serine and threonine residues present in the C-terminal region. As to expression, predominant opsin expressed in the dorsal ocelli.

It localises to the membrane. Visual pigments are the light-absorbing molecules that mediate vision. They consist of an apoprotein, opsin, covalently linked to cis-retinal. The chain is Opsin Rh2 (Rh2) from Drosophila melanogaster (Fruit fly).